A 308-amino-acid polypeptide reads, in one-letter code: tRNA dimethylallyltransferase (308 aa).

14-21 (GPTASGKT) provides a ligand contact to ATP. Residue 16 to 21 (TASGKT) participates in substrate binding. Interaction with substrate tRNA stretches follow at residues 39–42 (DSAL), 163–167 (QRLSR), and 244–249 (RCVGYR).

It belongs to the IPP transferase family. Monomer. It depends on Mg(2+) as a cofactor.

It catalyses the reaction adenosine(37) in tRNA + dimethylallyl diphosphate = N(6)-dimethylallyladenosine(37) in tRNA + diphosphate. In terms of biological role, catalyzes the transfer of a dimethylallyl group onto the adenine at position 37 in tRNAs that read codons beginning with uridine, leading to the formation of N6-(dimethylallyl)adenosine (i(6)A). In Shewanella baltica (strain OS185), this protein is tRNA dimethylallyltransferase.